The following is a 174-amino-acid chain: Frataxin homolog, mitochondrial (174 aa).

A mitochondrion-targeting transit peptide spans 1–21; sequence MIKRSLASLVRVSSVMGRRYM.

It belongs to the frataxin family. Monomer. Forms a 24-mer complex made up of 8 copies of a trimeric subcomplex. Increments in mitochondrial iron uptake induce stepwise assembly of species ranging from trimers to 24-mers. Interacts with ISU1 with a 1 to 1 stoichiometry; the interaction is direct. Interacts with YHB1, SDH1, SDH2, AIM45 and CIR1. Post-translationally, processed in two steps by mitochondrial processing peptidase (MPP). MPP first cleaves the precursor to intermediate form and subsequently converts the intermediate to mature size protein.

Its subcellular location is the mitochondrion matrix. It carries out the reaction 4 Fe(2+) + O2 + 4 H(+) = 4 Fe(3+) + 2 H2O. In terms of biological role, promotes the biosynthesis of heme as well as the assembly and repair of iron-sulfur clusters by delivering Fe(2+) to proteins involved in these pathways. Plays a role in the protection against iron-catalyzed oxidative stress through its ability to catalyze the oxidation of Fe(2+) to Fe(3+). Can store large amounts of the metal in the form of a ferrihydrite mineral by oligomerization. May be involved in regulation of the mitochondrial electron transport chain. This Saccharomyces cerevisiae (strain ATCC 204508 / S288c) (Baker's yeast) protein is Frataxin homolog, mitochondrial.